Consider the following 395-residue polypeptide: Carbohydrate sulfotransferase 5 (395 aa).

Residues 1–7 (MRLPRFS) lie on the Cytoplasmic side of the membrane. A helical; Signal-anchor for type II membrane protein transmembrane segment spans residues 8–26 (STVMLSLLMVQTGILVFLV). The Lumenal portion of the chain corresponds to 27–395 (SRQVPSSPAG…ASSTEKQPES (369 aa)). Residue 49 to 55 (WRSGSSF) participates in 3'-phosphoadenylyl sulfate binding. N-linked (GlcNAc...) asparagine glycans are attached at residues N116 and N142. 202 to 210 (RDPRAVLRS) is a 3'-phosphoadenylyl sulfate binding site. N229 and N305 each carry an N-linked (GlcNAc...) asparagine glycan.

It belongs to the sulfotransferase 1 family. Gal/GlcNAc/GalNAc subfamily. Expressed in cornea.

Its subcellular location is the golgi apparatus membrane. Its function is as follows. Sulfotransferase that utilizes 3'-phospho-5'-adenylyl sulfate (PAPS) as sulfonate donor to catalyze the transfer of sulfate to position 6 of non-reducing N-acetylglucosamine (GlcNAc) residues of keratan. Mediates sulfation of keratan in cornea. Keratan sulfate plays a central role in maintaining corneal transparency. Acts on the non-reducing terminal GlcNAc of short and long carbohydrate substrates that have poly-N-acetyllactosamine structures. May also have activity toward O-linked sugars of mucin-type acceptors. This Mus musculus (Mouse) protein is Carbohydrate sulfotransferase 5 (Chst5).